Here is a 65-residue protein sequence, read N- to C-terminus: MPKLKTRKAAAKRFKATGTGKFLRRRAFRNHLLDHKTPKQKRHLATKAVVDRTDEERVTLMMPYA.

Belongs to the bacterial ribosomal protein bL35 family.

The sequence is that of Large ribosomal subunit protein bL35 from Synechococcus sp. (strain CC9605).